The chain runs to 214 residues: Endothelin-3 (214 aa).

Residues 1-16 form the signal peptide; the sequence is MEPGLWLLLGLTVTSA. A propeptide spanning residues 17–94 is cleaved from the precursor; sequence AGLVPCPQSG…DKGLPAHHRP (78 aa). Positions 24–91 are disordered; the sequence is QSGDSGRASV…KQEDKGLPAH (68 aa). A compositionally biased stretch (polar residues) spans 25–35; the sequence is SGDSGRASVSQ. 2 cysteine pairs are disulfide-bonded: C97/C111 and C99/C107. Positions 118-214 are excised as a propeptide; that stretch reads INTPEQTVPY…MSRTDKAHRP (97 aa). An endothelin-like region spans residues 159–173; sequence CTCMGADDKACAHFC. Residues 183 to 214 form a disordered region; the sequence is SGRAERPAAEEMRETGGPRQRLMSRTDKAHRP. Basic and acidic residues predominate over residues 185 to 198; sequence RAERPAAEEMRETG.

It belongs to the endothelin/sarafotoxin family.

The protein resides in the secreted. Functionally, endothelins are endothelium-derived vasoconstrictor peptides. This chain is Endothelin-3 (Edn3), found in Mus musculus (Mouse).